The following is a 38-amino-acid chain: Odorant-binding protein 2 (38 aa).

This sequence belongs to the calycin superfamily. Lipocalin family. In terms of tissue distribution, nasal mucosa.

Its subcellular location is the secreted. The protein localises to the extracellular space. In terms of biological role, this soluble protein may play a specific role in odor discrimination and perception. The protein is Odorant-binding protein 2 of Hystrix cristata (North African crested porcupine).